The sequence spans 500 residues: Glycerol kinase (500 aa).

T13 serves as a coordination point for ADP. Residues T13, T14, and S15 each contribute to the ATP site. T13 is a sn-glycerol 3-phosphate binding site. R17 is a binding site for ADP. Residues R83, E84, Y136, and D246 each contribute to the sn-glycerol 3-phosphate site. Glycerol is bound by residues R83, E84, Y136, D246, and Q247. Positions 268 and 311 each coordinate ADP. Positions 268, 311, 315, and 412 each coordinate ATP. The ADP site is built by G412 and N416.

It belongs to the FGGY kinase family.

It carries out the reaction glycerol + ATP = sn-glycerol 3-phosphate + ADP + H(+). Its pathway is polyol metabolism; glycerol degradation via glycerol kinase pathway; sn-glycerol 3-phosphate from glycerol: step 1/1. With respect to regulation, inhibited by fructose 1,6-bisphosphate (FBP). Its function is as follows. Key enzyme in the regulation of glycerol uptake and metabolism. Catalyzes the phosphorylation of glycerol to yield sn-glycerol 3-phosphate. This chain is Glycerol kinase, found in Francisella tularensis subsp. novicida (strain U112).